A 92-amino-acid polypeptide reads, in one-letter code: CRISPR-associated endoribonuclease Cas2 2 (92 aa).

Asp-12 contacts Mg(2+).

This sequence belongs to the CRISPR-associated endoribonuclease Cas2 protein family. In terms of assembly, homodimer, forms a heterotetramer with a Cas1 homodimer. Mg(2+) serves as cofactor.

In terms of biological role, CRISPR (clustered regularly interspaced short palindromic repeat), is an adaptive immune system that provides protection against mobile genetic elements (viruses, transposable elements and conjugative plasmids). CRISPR clusters contain sequences complementary to antecedent mobile elements and target invading nucleic acids. CRISPR clusters are transcribed and processed into CRISPR RNA (crRNA). Functions as a ssRNA-specific endoribonuclease. Involved in the integration of spacer DNA into the CRISPR cassette. The polypeptide is CRISPR-associated endoribonuclease Cas2 2 (cas22) (Archaeoglobus fulgidus (strain ATCC 49558 / DSM 4304 / JCM 9628 / NBRC 100126 / VC-16)).